The following is a 445-amino-acid chain: Ubiquitin carboxyl-terminal hydrolase 11 (445 aa).

The USP domain maps to asparagine 1 to glutamine 412. A disordered region spans residues arginine 127–arginine 194. Serine 130 bears the Phosphoserine mark. Residues aspartate 131 to aspartate 140 are compositionally biased toward acidic residues. Histidine 362 functions as the Nucleophile in the catalytic mechanism. Histidine 370 functions as the Proton acceptor in the catalytic mechanism. The tract at residues arginine 416–asparagine 445 is disordered. Positions proline 420 to serine 439 are enriched in low complexity. The residue at position 430 (serine 430) is a Phosphoserine.

The protein belongs to the peptidase C19 family. In terms of assembly, monomer. Interacts with RANBP9/RANBPM. Interacts with BRCA2. Interacts with CHUK/IKKA. Interacts with NFKBIA. Associated component of the Polycomb group (PcG) multiprotein PRC1-like complex.

Its subcellular location is the nucleus. The protein resides in the cytoplasm. The protein localises to the chromosome. It carries out the reaction Thiol-dependent hydrolysis of ester, thioester, amide, peptide and isopeptide bonds formed by the C-terminal Gly of ubiquitin (a 76-residue protein attached to proteins as an intracellular targeting signal).. In terms of biological role, protease that can remove conjugated ubiquitin from target proteins and polyubiquitin chains. Inhibits the degradation of target proteins by the proteasome. Cleaves preferentially 'Lys-6' and 'Lys-63'-linked ubiquitin chains. Has lower activity with 'Lys-11' and 'Lys-33'-linked ubiquitin chains, and extremely low activity with 'Lys-27', 'Lys-29' and 'Lys-48'-linked ubiquitin chains (in vitro). Plays a role in the regulation of pathways leading to NF-kappa-B activation. Plays a role in the regulation of DNA repair after double-stranded DNA breaks. Acts as a chromatin regulator via its association with the Polycomb group (PcG) multiprotein PRC1-like complex; may act by deubiquitinating components of the PRC1-like complex. Promotes cell proliferation by deubiquitinating phosphorylated E2F1. The polypeptide is Ubiquitin carboxyl-terminal hydrolase 11 (USP11) (Canis lupus familiaris (Dog)).